The primary structure comprises 306 residues: UDP-N-acetylenolpyruvoylglucosamine reductase (306 aa).

Residues 30–216 (RIGGPVPYIL…KSKLIDFSTR (187 aa)) enclose the FAD-binding PCMH-type domain. Arg-180 is an active-site residue. Ser-230 (proton donor) is an active-site residue. The active site involves Glu-301.

It belongs to the MurB family. FAD is required as a cofactor.

The protein localises to the cytoplasm. It carries out the reaction UDP-N-acetyl-alpha-D-muramate + NADP(+) = UDP-N-acetyl-3-O-(1-carboxyvinyl)-alpha-D-glucosamine + NADPH + H(+). It functions in the pathway cell wall biogenesis; peptidoglycan biosynthesis. Functionally, cell wall formation. This chain is UDP-N-acetylenolpyruvoylglucosamine reductase, found in Petrotoga mobilis (strain DSM 10674 / SJ95).